A 136-amino-acid polypeptide reads, in one-letter code: NADH-quinone oxidoreductase subunit A (136 aa).

The next 3 membrane-spanning stretches (helical) occupy residues 20-40 (LAVY…VAWW), 70-90 (VPFY…AYIL), and 99-119 (LGWA…VGLV).

This sequence belongs to the complex I subunit 3 family. NDH-1 is composed of 14 different subunits. Subunits NuoA, H, J, K, L, M, N constitute the membrane sector of the complex.

It localises to the cell inner membrane. The enzyme catalyses a quinone + NADH + 5 H(+)(in) = a quinol + NAD(+) + 4 H(+)(out). Functionally, NDH-1 shuttles electrons from NADH, via FMN and iron-sulfur (Fe-S) centers, to quinones in the respiratory chain. The immediate electron acceptor for the enzyme in this species is believed to be ubiquinone. Couples the redox reaction to proton translocation (for every two electrons transferred, four hydrogen ions are translocated across the cytoplasmic membrane), and thus conserves the redox energy in a proton gradient. The sequence is that of NADH-quinone oxidoreductase subunit A from Syntrophobacter fumaroxidans (strain DSM 10017 / MPOB).